The primary structure comprises 274 residues: Rhamnulose-1-phosphate aldolase (274 aa).

E117 is a catalytic residue. Residues H141, H143, and H212 each coordinate Zn(2+).

It belongs to the aldolase class II family. RhaD subfamily. In terms of assembly, homotetramer. It depends on Zn(2+) as a cofactor.

Its subcellular location is the cytoplasm. It carries out the reaction L-rhamnulose 1-phosphate = (S)-lactaldehyde + dihydroxyacetone phosphate. It functions in the pathway carbohydrate degradation; L-rhamnose degradation; glycerone phosphate from L-rhamnose: step 3/3. Catalyzes the reversible cleavage of L-rhamnulose-1-phosphate to dihydroxyacetone phosphate (DHAP) and L-lactaldehyde. The chain is Rhamnulose-1-phosphate aldolase from Shigella boydii serotype 4 (strain Sb227).